Here is a 562-residue protein sequence, read N- to C-terminus: Adenylate kinase isoenzyme 5 (562 aa).

2 adenylate kinase regions span residues 133–316 (KIIL…VAVD) and 377–559 (KIIF…TAID). 142-147 (GSGKGT) provides a ligand contact to ATP. The NMP 1 stretch occupies residues 162-193 (SVGELLRKKIHSASSNRKWSLIAKIITNGELA). AMP is bound by residues Arg-168, 191–193 (ELA), 219–222 (GFPR), and Gln-226. The interval 256 to 266 (KRAEQQGRPDD) is LID 1. Residue Arg-257 participates in ATP binding. The AMP site is built by Arg-263 and Arg-274. 386–391 (GSGKGT) serves as a coordination point for ATP. The tract at residues 406-435 (STGELLRQELTSESERSKLIRDIMERGDLV) is NMP 2. Residues Thr-407, Arg-412, 433 to 435 (DLV), 462 to 465 (GYPR), and Gln-469 each bind AMP. An LID 2 region spans residues 499–509 (QRSQSSQRGED). Arg-500 provides a ligand contact to ATP. AMP is bound by residues Arg-506 and Arg-517. Position 545 (Gly-545) interacts with ATP.

Belongs to the adenylate kinase family. As to quaternary structure, monomer. Interacts with YWHAZ. Brain specific.

It localises to the cytoplasm. It catalyses the reaction AMP + ATP = 2 ADP. The catalysed reaction is a 2'-deoxyribonucleoside 5'-diphosphate + ATP = a 2'-deoxyribonucleoside 5'-triphosphate + ADP. The enzyme catalyses a ribonucleoside 5'-diphosphate + ATP = a ribonucleoside 5'-triphosphate + ADP. Functionally, nucleoside monophosphate (NMP) kinase that catalyzes the reversible transfer of the terminal phosphate group between nucleoside triphosphates and monophosphates. Active on AMP and dAMP with ATP as a donor. When GTP is used as phosphate donor, the enzyme phosphorylates AMP, CMP, and to a small extent dCMP. Also displays broad nucleoside diphosphate kinase activity. The protein is Adenylate kinase isoenzyme 5 (Ak5) of Mus musculus (Mouse).